Consider the following 137-residue polypeptide: F420H(2)-dependent biliverdin reductase (137 aa).

Coenzyme F420-(gamma-Glu)n is bound by residues 36 to 41, 54 to 55, 60 to 61, Arg-67, and 78 to 81; these read HVVAVG, IT, QK, and GARW.

Belongs to the F420H(2)-dependent biliverdin reductase family. Homodimer.

It is found in the cell surface. Its subcellular location is the secreted. The catalysed reaction is (4Z,15Z)-bilirubin IXalpha + oxidized coenzyme F420-(gamma-L-Glu)(n) + H(+) = biliverdin IXalpha + reduced coenzyme F420-(gamma-L-Glu)(n). Functionally, catalyzes the F420H(2)-dependent reduction of biliverdin-IXalpha at C10 position, leading to bilirubin-IXalpha, a potent antioxidant. As biliverdin-IXalpha is produced in high amounts in macrophages infected with M.tuberculosis, its reduction by Rv2074 may play a role in protecting mycobacteria against oxidative stress, aiding the persistence of M.tuberculosis infection. This is F420H(2)-dependent biliverdin reductase from Mycobacterium tuberculosis (strain CDC 1551 / Oshkosh).